Here is a 1319-residue protein sequence, read N- to C-terminus: DNA-directed RNA polymerase subunit beta' (1319 aa).

The Zn(2+) site is built by Cys59, Cys61, Cys74, and Cys77. Residues Asp449, Asp451, and Asp453 each coordinate Mg(2+). Zn(2+) contacts are provided by Cys773, Cys846, Cys853, and Cys856.

This sequence belongs to the RNA polymerase beta' chain family. In terms of assembly, the RNAP catalytic core consists of 2 alpha, 1 beta, 1 beta' and 1 omega subunit. When a sigma factor is associated with the core the holoenzyme is formed, which can initiate transcription. It depends on Mg(2+) as a cofactor. The cofactor is Zn(2+).

It carries out the reaction RNA(n) + a ribonucleoside 5'-triphosphate = RNA(n+1) + diphosphate. Functionally, DNA-dependent RNA polymerase catalyzes the transcription of DNA into RNA using the four ribonucleoside triphosphates as substrates. This is DNA-directed RNA polymerase subunit beta' from Fusobacterium nucleatum subsp. nucleatum (strain ATCC 25586 / DSM 15643 / BCRC 10681 / CIP 101130 / JCM 8532 / KCTC 2640 / LMG 13131 / VPI 4355).